A 410-amino-acid polypeptide reads, in one-letter code: Beta-arrestin-2 (410 aa).

Y48 carries the post-translational modification Phosphotyrosine. A hydroxyproline; by PHD2 mark is found at P176 and P181. The interaction with TRAF6 stretch occupies residues 241–410 (ADICLFSTAQ…KDDDCDDQFC (170 aa)). S361 carries the phosphoserine modification. The tract at residues 364–410 (RETDVPVDTNLIEFDTNYATDDDIVFEDFARLRLKGMKDDDCDDQFC) is interaction with AP2B1. A Phosphothreonine modification is found at T383. The short motif at 386 to 396 (DIVFEDFARLR) is the [DE]-X(1,2)-F-X-X-[FL]-X-X-X-R motif element.

It belongs to the arrestin family. As to quaternary structure, homooligomer; the self-association is mediated by InsP6-binding. Heterooligomer with ARRB1; the association is mediated by InsP6-binding. Interacts with ADRB2 and CHRM2. Interacts with PDE4A. Interacts with PDE4D. Interacts with MAPK10, MAPK1 and MAPK3. Interacts with DRD2. Interacts with FSHR. Interacts with CLTC. Interacts with HTR2C. Interacts with CCR5. Interacts with CXCR4. Interacts with SRC. Interacts with DUSP16; the interaction is interrupted by stimulation of AGTR1 and activation of MAPK10. Interacts with CHUK; the interaction is enhanced stimulation of ADRB2. Interacts with RELA. Interacts with MDM2; the interaction is enhanced by activation of GPCRs. Interacts with SLC9A5. Interacts with TRAF6. Interacts with IGF1R. Interacts with ENG. Interacts with ARRB2. Interacts with KIR2DL1, KIR2DL3 and KIR2DL4. Interacts with LDLR. Interacts with AP2B1. Interacts with C5AR1. Interacts with RAF1. Interacts with MAP2K1. Interacts with MAPK1. Interacts with MAPK10; the interaction enhances MAPK10 activation by MAP3K5. Interacts with MAP2K4; the interaction is enhanced by presence of MAP3K5 and MAPK10. Interacts with MAP3K5. Interacts with AKT1. Interacts with IKBKB and MAP3K14. Interacts with SMO (activated). Interacts with GSK3A and GSK3B. Interacts with CXCR4; the interaction is dependent on C-terminal phosphorylation of CXCR4 and allows activation of MAPK1 and MAPK3. Interacts with GPR143. Interacts with HCK and CXCR1 (phosphorylated). Associates with protein phosphatase 2A (PP2A). Interacts with ACKR3 and ACKR4. Interacts with ARRDC1; the interaction is direct. Interacts with GPR61, GPR62 and GPR135. Interacts (via NACHT and LRR domains) with NLRP3; this interaction is direct and inducible by omega-3 polyunsaturated fatty acids (PUFAs). Interacts with FFAR4 (via C-terminus); this interaction is stimulated by long-chain fatty acids (LCFAs). Interacts with GPR35. Interacts with GPR84. Interacts with TIGIT; this interaction inhibits the NF-kappa-B pathway. Interacts with TGFBR3. Post-translationally, phosphorylated at Thr-383 in the cytoplasm; probably dephosphorylated at the plasma membrane. The phosphorylation does not regulate internalization and recycling of ADRB2, interaction with clathrin or AP2B1. The ubiquitination status appears to regulate the formation and trafficking of beta-arrestin-GPCR complexes and signaling. Ubiquitination appears to occur GPCR-specific. Ubiquitinated by MDM2; the ubiquitination is required for rapid internalization of ADRB2. Deubiquitinated by USP33; the deubiquitination leads to a dissociation of the beta-arrestin-GPCR complex. Stimulation of a class A GPCR, such as ADRB2, induces transient ubiquitination and subsequently promotes association with USP33. Stimulation of a class B GPCR promotes a sustained ubiquitination. Deubiquitinated by USP20; allowing USP20 to deubiquitinate TRAF6 leading to inhibition of NF-kappa-B signaling. In terms of processing, hydroxylation by PHD2 modulates the rate of internalization by slowing down recruitment to the plasma membrane and inhibiting subsequent co-internalization with class A receptors. In terms of tissue distribution, predominantly localized in neuronal tissues and in the spleen.

The protein resides in the cytoplasm. The protein localises to the nucleus. It is found in the cell membrane. It localises to the membrane. Its subcellular location is the clathrin-coated pit. The protein resides in the cytoplasmic vesicle. In terms of biological role, functions in regulating agonist-mediated G-protein coupled receptor (GPCR) signaling by mediating both receptor desensitization and resensitization processes. During homologous desensitization, beta-arrestins bind to the GPRK-phosphorylated receptor and sterically preclude its coupling to the cognate G-protein; the binding appears to require additional receptor determinants exposed only in the active receptor conformation. The beta-arrestins target many receptors for internalization by acting as endocytic adapters (CLASPs, clathrin-associated sorting proteins) and recruiting the GPRCs to the adapter protein 2 complex 2 (AP-2) in clathrin-coated pits (CCPs). However, the extent of beta-arrestin involvement appears to vary significantly depending on the receptor, agonist and cell type. Internalized arrestin-receptor complexes traffic to intracellular endosomes, where they remain uncoupled from G-proteins. Two different modes of arrestin-mediated internalization occur. Class A receptors, like ADRB2, OPRM1, ENDRA, D1AR and ADRA1B dissociate from beta-arrestin at or near the plasma membrane and undergo rapid recycling. Class B receptors, like AVPR2, AGTR1, NTSR1, TRHR and TACR1 internalize as a complex with arrestin and traffic with it to endosomal vesicles, presumably as desensitized receptors, for extended periods of time. Receptor resensitization then requires that receptor-bound arrestin is removed so that the receptor can be dephosphorylated and returned to the plasma membrane. Mediates endocytosis of CCR7 following ligation of CCL19 but not CCL21. Involved in internalization of P2RY1, P2RY4, P2RY6 and P2RY11 and ATP-stimulated internalization of P2RY2. Involved in phosphorylation-dependent internalization of OPRD1 and subsequent recycling or degradation. Involved in ubiquitination of IGF1R. Beta-arrestins function as multivalent adapter proteins that can switch the GPCR from a G-protein signaling mode that transmits short-lived signals from the plasma membrane via small molecule second messengers and ion channels to a beta-arrestin signaling mode that transmits a distinct set of signals that are initiated as the receptor internalizes and transits the intracellular compartment. Acts as a signaling scaffold for MAPK pathways such as MAPK1/3 (ERK1/2) and MAPK10 (JNK3). ERK1/2 and JNK3 activated by the beta-arrestin scaffold are largely excluded from the nucleus and confined to cytoplasmic locations such as endocytic vesicles, also called beta-arrestin signalosomes. Acts as a signaling scaffold for the AKT1 pathway. GPCRs for which the beta-arrestin-mediated signaling relies on both ARRB1 and ARRB2 (codependent regulation) include ADRB2, F2RL1 and PTH1R. For some GPCRs the beta-arrestin-mediated signaling relies on either ARRB1 or ARRB2 and is inhibited by the other respective beta-arrestin form (reciprocal regulation). Increases ERK1/2 signaling in AGTR1- and AVPR2-mediated activation (reciprocal regulation). Involved in CCR7-mediated ERK1/2 signaling involving ligand CCL19. Is involved in type-1A angiotensin II receptor/AGTR1-mediated ERK activity. Is involved in type-1A angiotensin II receptor/AGTR1-mediated MAPK10 activity. Is involved in dopamine-stimulated AKT1 activity in the striatum by disrupting the association of AKT1 with its negative regulator PP2A. Involved in AGTR1-mediated chemotaxis. Appears to function as signaling scaffold involved in regulation of MIP-1-beta-stimulated CCR5-dependent chemotaxis. Involved in attenuation of NF-kappa-B-dependent transcription in response to GPCR or cytokine stimulation by interacting with and stabilizing CHUK. Suppresses UV-induced NF-kappa-B-dependent activation by interacting with CHUK. The function is promoted by stimulation of ADRB2 and dephosphorylation of ARRB2. Involved in IL8-mediated granule release in neutrophils. Involved in p53/TP53-mediated apoptosis by regulating MDM2 and reducing the MDM2-mediated degradation of p53/TP53. May serve as nuclear messenger for GPCRs. Upon stimulation of OR1D2, may be involved in regulation of gene expression during the early processes of fertilization. Also involved in regulation of receptors other than GPCRs. Involved in endocytosis of TGFBR2 and TGFBR3 and down-regulates TGF-beta signaling such as NF-kappa-B activation. Involved in endocytosis of low-density lipoprotein receptor/LDLR. Involved in endocytosis of smoothened homolog/Smo, which also requires GRK2. Involved in endocytosis of SLC9A5. Involved in endocytosis of ENG and subsequent TGF-beta-mediated ERK activation and migration of epithelial cells. Involved in Toll-like receptor and IL-1 receptor signaling through the interaction with TRAF6 which prevents TRAF6 autoubiquitination and oligomerization required for activation of NF-kappa-B and JUN. Involved in insulin resistance by acting as insulin-induced signaling scaffold for SRC, AKT1 and INSR. Involved in regulation of inhibitory signaling of natural killer cells by recruiting PTPN6 and PTPN11 to KIR2DL1. Involved in the internalization of the atypical chemokine receptor ACKR3. Acts as an adapter protein coupling FFAR4 receptor to specific downstream signaling pathways, as well as mediating receptor endocytosis. During the activation step of NLRP3 inflammasome, directly associates with NLRP3 leading to inhibition of pro-inflammatory cytokine release and inhibition of inflammation. This chain is Beta-arrestin-2 (Arrb2), found in Mus musculus (Mouse).